The following is a 517-amino-acid chain: Cytochrome P450 monooxygenase calE (517 aa).

N-linked (GlcNAc...) asparagine glycosylation is present at asparagine 8. Residues 14–34 (SLMHHYILIAILVASIIAMVV) form a helical membrane-spanning segment. Cysteine 458 contacts heme.

It belongs to the cytochrome P450 family. It depends on heme as a cofactor.

Its subcellular location is the membrane. It functions in the pathway secondary metabolite biosynthesis. Cytochrome P450 monooxygenase; part of the gene cluster that mediates the biosynthesis of calbistrin A and related compounds. Calbistrin A is a secondary metabolite with an interesting structure that was recently found to have bioactivity against leukemia cells. It consists of two polyketides linked by an ester bond: a bicyclic decalin containing polyketide and a linear 12 carbon dioic acid structure. The polyketide synthase calA is probably responsible for forming the decalin moiety. Because calA lacks a designated enoylreductase (ER) domain, the required activity is provided by the trans-enoyl reductase calK. Following release from the PKS, calF then probably catalyzes the oxidation and the subsequent Diels Alder cycloisomerization that lead to the formation of the decalin moiety. The decalin polyketide backbone includes two C-methyl groups, at C7 and C11 in backbone, of which the C7 position is probably methylated by the methyltransferase domain of calA. A candidate for adding the methyl group at C11, if not done by CalA, is the cluster methyltransferase calH. Several additional tailoring enzymes within the cluster could be involved in the modification of the decalin polyketide product. Those include the 3 cytochrome P450 monooxygenases CalE, CalG and CalL, of which one might be responsible for the introduction of the extra hydroxyl group attached to the backbone of the decalin moiety, at position C9 in the backbone, that allows for attachment of the linear moiety. One tailoring enzyme activity that is expected to be involved in biosynthesis of calbistrin is an acyltransferase for connecting the two polyketide synthase products, and which could be performed by the cluster acyltransferase calJ. The enzyme responsible for the biosynthesis of the linear moiety, probably a second PKS, has not been identified yet. In Penicillium decumbens, this protein is Cytochrome P450 monooxygenase calE.